Here is a 196-residue protein sequence, read N- to C-terminus: Imidazole glycerol phosphate synthase subunit HisH (196 aa).

The region spanning 2–196 (NVVILDTGCA…AKLLKNFLEM (195 aa)) is the Glutamine amidotransferase type-1 domain. The active-site Nucleophile is C77. Residues H178 and E180 contribute to the active site.

As to quaternary structure, heterodimer of HisH and HisF.

The protein resides in the cytoplasm. The catalysed reaction is 5-[(5-phospho-1-deoxy-D-ribulos-1-ylimino)methylamino]-1-(5-phospho-beta-D-ribosyl)imidazole-4-carboxamide + L-glutamine = D-erythro-1-(imidazol-4-yl)glycerol 3-phosphate + 5-amino-1-(5-phospho-beta-D-ribosyl)imidazole-4-carboxamide + L-glutamate + H(+). The enzyme catalyses L-glutamine + H2O = L-glutamate + NH4(+). It functions in the pathway amino-acid biosynthesis; L-histidine biosynthesis; L-histidine from 5-phospho-alpha-D-ribose 1-diphosphate: step 5/9. Functionally, IGPS catalyzes the conversion of PRFAR and glutamine to IGP, AICAR and glutamate. The HisH subunit catalyzes the hydrolysis of glutamine to glutamate and ammonia as part of the synthesis of IGP and AICAR. The resulting ammonia molecule is channeled to the active site of HisF. The sequence is that of Imidazole glycerol phosphate synthase subunit HisH from Shigella flexneri.